Reading from the N-terminus, the 112-residue chain is UPF0251 protein MA_4245 (112 aa).

This sequence belongs to the UPF0251 family.

This is UPF0251 protein MA_4245 from Methanosarcina acetivorans (strain ATCC 35395 / DSM 2834 / JCM 12185 / C2A).